Consider the following 295-residue polypeptide: Proline-rich protein 32 (295 aa).

Disordered regions lie at residues 10-48 (GHAPSPTAVAAAENGNREPRPSLPFQCPKDDAGSWGHPG) and 101-120 (ATGEVNSSEGPAGWRQSGQD).

In Bos taurus (Bovine), this protein is Proline-rich protein 32 (PRR32).